Reading from the N-terminus, the 380-residue chain is Probable tRNA-splicing endonuclease subunit sen2 (380 aa).

Residues Y281, H289, and K325 contribute to the active site.

The protein belongs to the tRNA-intron endonuclease family. Heterotetramer composed of sen2, sen15, sen34 and sen54. Interacts directly with sen54.

It carries out the reaction pretRNA = a 3'-half-tRNA molecule with a 5'-OH end + a 5'-half-tRNA molecule with a 2',3'-cyclic phosphate end + an intron with a 2',3'-cyclic phosphate and a 5'-hydroxyl terminus.. Constitutes one of the two catalytic subunit of the tRNA-splicing endonuclease complex, a complex responsible for identification and cleavage of the splice sites in pre-tRNA. It cleaves pre-tRNA at the 5'- and 3'-splice sites to release the intron. The products are an intron and two tRNA half-molecules bearing 2',3'-cyclic phosphate and 5'-OH termini. There are no conserved sequences at the splice sites, but the intron is invariably located at the same site in the gene, placing the splice sites an invariant distance from the constant structural features of the tRNA body. This subunit may anchor the endonuclease complex to the nuclear membrane. Probably carries the active site for 5'-splice site cleavage. This is Probable tRNA-splicing endonuclease subunit sen2 (sen2) from Schizosaccharomyces pombe (strain 972 / ATCC 24843) (Fission yeast).